The following is a 374-amino-acid chain: MTDALQIPRDLLPADGRFGAGPSKIQTAHLDALAATGSTLMGTSHRQAPVRDLVGRVRSGLAELFSLPDGYQVVLGNGGATAFWDIATYGLIQERSQHLTFGEFSSKFAKAAKAAPWLADPSVIASEPGSRPAPVAEDGVDAYAWAHNETSTAVMAPVVRPAGTSSDSSLVLVDATSGAGGLPVDLREVDVYYFAPQKCFASDGGLWIALFSPAALERAATVAASGRHIPAFFDLPTAIDNSAKNQTYNTPAVATLFLMAEQLDWMNASGGLDGMVARTTESSDTLYTWAEKSPYAFPYVTDPDHRSLVIGTIDFEDGIDAARVAAVLRANGVVDTEPYRKLGRNQLRIAMYPAVDPADVEALTRSIDWVVDHL.

Position 46 (R46) interacts with L-glutamate. Pyridoxal 5'-phosphate-binding positions include 80 to 81 (AT), F104, T150, D174, and Q197. K198 carries the post-translational modification N6-(pyridoxal phosphate)lysine. 249–250 (NT) contributes to the pyridoxal 5'-phosphate binding site.

Belongs to the class-V pyridoxal-phosphate-dependent aminotransferase family. SerC subfamily. As to quaternary structure, homodimer. Requires pyridoxal 5'-phosphate as cofactor.

It is found in the cytoplasm. It carries out the reaction O-phospho-L-serine + 2-oxoglutarate = 3-phosphooxypyruvate + L-glutamate. The catalysed reaction is 4-(phosphooxy)-L-threonine + 2-oxoglutarate = (R)-3-hydroxy-2-oxo-4-phosphooxybutanoate + L-glutamate. The protein operates within amino-acid biosynthesis; L-serine biosynthesis; L-serine from 3-phospho-D-glycerate: step 2/3. It functions in the pathway cofactor biosynthesis; pyridoxine 5'-phosphate biosynthesis; pyridoxine 5'-phosphate from D-erythrose 4-phosphate: step 3/5. In terms of biological role, catalyzes the reversible conversion of 3-phosphohydroxypyruvate to phosphoserine and of 3-hydroxy-2-oxo-4-phosphonooxybutanoate to phosphohydroxythreonine. This is Phosphoserine aminotransferase from Nocardioides sp. (strain ATCC BAA-499 / JS614).